The primary structure comprises 409 residues: Serine protease inhibitor 2 (409 aa).

The first 21 residues, 1–21 (MNKLNFVILCLAALLVFDATA), serve as a signal peptide directing secretion. N-linked (GlcNAc...) asparagine glycans are attached at residues N294 and N324. The Hinge region; required for binding to peptidase motif lies at 356-360 (LGSEA).

It belongs to the serpin family. In terms of assembly, forms a covalent heterodimer with protease CLIPB9; the interaction inhibits CLIPB9 protease activity. Forms a covalent heterodimer with protease CLIPB10; the interaction inhibits CLIPB10 catalytic activity. Interacts with CLIPB4 in the hemolymph of immune-challenged female mosquitoes; the interaction results in CLIPB4 inhibition. In terms of processing, protease CLIPB9 binds to SRPN2 via the hinge region resulting in the cleavage of the reactive bond. This leads to a conformational change in SRPN2 which traps CLIPB9 and distorts its active site, resulting in CLIPB9 inactivation.

Its subcellular location is the secreted. In terms of biological role, serine protease inhibitor that functions in the melanization-mediated immune response. By preventing the activation of phenoloxidases through the inhibiting of serine proteases CLIPB9, CLIPB10 and CLIPB4, negatively regulates melanization in the hemolymph. By preventing melanization, has a detrimental role during P.berghei parasite mediated-infection and invasion of the mosquito midgut. The protein is Serine protease inhibitor 2 of Anopheles gambiae (African malaria mosquito).